Consider the following 322-residue polypeptide: Lipoyl synthase (322 aa).

[4Fe-4S] cluster-binding residues include Cys-61, Cys-66, Cys-72, Cys-87, Cys-91, Cys-94, and Ser-300. A Radical SAM core domain is found at 73-289; that stretch reads WDKKHATFMI…ETVAYTKGFL (217 aa).

This sequence belongs to the radical SAM superfamily. Lipoyl synthase family. It depends on [4Fe-4S] cluster as a cofactor.

It is found in the cytoplasm. The catalysed reaction is [[Fe-S] cluster scaffold protein carrying a second [4Fe-4S](2+) cluster] + N(6)-octanoyl-L-lysyl-[protein] + 2 oxidized [2Fe-2S]-[ferredoxin] + 2 S-adenosyl-L-methionine + 4 H(+) = [[Fe-S] cluster scaffold protein] + N(6)-[(R)-dihydrolipoyl]-L-lysyl-[protein] + 4 Fe(3+) + 2 hydrogen sulfide + 2 5'-deoxyadenosine + 2 L-methionine + 2 reduced [2Fe-2S]-[ferredoxin]. The protein operates within protein modification; protein lipoylation via endogenous pathway; protein N(6)-(lipoyl)lysine from octanoyl-[acyl-carrier-protein]: step 2/2. Its function is as follows. Catalyzes the radical-mediated insertion of two sulfur atoms into the C-6 and C-8 positions of the octanoyl moiety bound to the lipoyl domains of lipoate-dependent enzymes, thereby converting the octanoylated domains into lipoylated derivatives. The protein is Lipoyl synthase of Rhizobium meliloti (strain 1021) (Ensifer meliloti).